The sequence spans 348 residues: MKIIIDDKIPYIKEAAEKIADEAIYAPGKDFTRELVQDADALIIRTRTHCNRELLEGSKVKFIATATIGFDHIDTEYCKQAGIEWANAPGCNSASVAQYIQSSLLIWKSLRNKKPDELTIGIIGVGNVGSKVAKVAQDFGMRVLLNDLPREEKEGNITFTSLEKIAEECDIITFHVPLYKEGKYKTYHLADGNFFRSLQRKPVVINTSRGEVIETNALLEAINNGIISDAVIDVWEHEPEINRELLEKVLIGTPHIAGYSADGKANATRMSLDSICRFFHLSATYEITPPAPSSPLIEAKDREEALLKMYNPIEDSNRLKSHPELFETLRGDYPLRREEKAYNIIGIK.

Residues T46 and T67 each contribute to the substrate site. D147 is an NAD(+) binding site. R209 is an active-site residue. D233 is an NAD(+) binding site. E238 is an active-site residue. Catalysis depends on H255, which acts as the Proton donor. G258 is an NAD(+) binding site. Y259 is a substrate binding site.

This sequence belongs to the D-isomer specific 2-hydroxyacid dehydrogenase family. PdxB subfamily. As to quaternary structure, homodimer.

Its subcellular location is the cytoplasm. The catalysed reaction is 4-phospho-D-erythronate + NAD(+) = (R)-3-hydroxy-2-oxo-4-phosphooxybutanoate + NADH + H(+). The protein operates within cofactor biosynthesis; pyridoxine 5'-phosphate biosynthesis; pyridoxine 5'-phosphate from D-erythrose 4-phosphate: step 2/5. In terms of biological role, catalyzes the oxidation of erythronate-4-phosphate to 3-hydroxy-2-oxo-4-phosphonooxybutanoate. The sequence is that of Erythronate-4-phosphate dehydrogenase from Bacteroides thetaiotaomicron (strain ATCC 29148 / DSM 2079 / JCM 5827 / CCUG 10774 / NCTC 10582 / VPI-5482 / E50).